A 158-amino-acid chain; its full sequence is Transcription elongation factor GreA (158 aa).

The stretch at 46-66 forms a coiled coil; it reads AEYEAAKERQGFIEGRISELE.

This sequence belongs to the GreA/GreB family.

In terms of biological role, necessary for efficient RNA polymerase transcription elongation past template-encoded arresting sites. The arresting sites in DNA have the property of trapping a certain fraction of elongating RNA polymerases that pass through, resulting in locked ternary complexes. Cleavage of the nascent transcript by cleavage factors such as GreA or GreB allows the resumption of elongation from the new 3'terminus. GreA releases sequences of 2 to 3 nucleotides. The protein is Transcription elongation factor GreA of Neisseria meningitidis serogroup B (strain ATCC BAA-335 / MC58).